Reading from the N-terminus, the 3097-residue chain is Neural-cadherin (3097 aa).

The signal sequence occupies residues 1–36 (MAARRCLNQLRQRYITNRFNICTCAIFLISLPFILA). 2 N-linked (GlcNAc...) asparagine glycosylation sites follow: asparagine 97 and asparagine 150. In terms of domain architecture, Cadherin 1 spans 181 to 305 (VRENQPAGTR…LDENDNRPIF (125 aa)). Residues asparagine 325 and asparagine 426 are each glycosylated (N-linked (GlcNAc...) asparagine). 15 consecutive Cadherin domains span residues 430–543 (HREK…PPYF), 554–651 (VQLN…APQF), 660–756 (IPEN…APKF), 766–858 (VDED…EPKF), 867–968 (VDEN…KPVF), 978–1078 (VEEG…PPLF), 1087–1183 (VKQD…PPVW), 1193–1299 (VKEN…IPLF), 1307–1414 (VLEG…PPYF), 1423–1514 (VDEN…PPVF), 1523–1630 (ITEE…APIF), 1639–1742 (VTEN…PPQF), 1749–1861 (TEVD…KPHF), 1870–1966 (VFED…APKF), and 1974–2085 (LPEH…QPGS). Asparagine 930 carries an N-linked (GlcNAc...) asparagine glycan. Asparagine 1266 carries N-linked (GlcNAc...) asparagine glycosylation. Intrachain disulfides connect cysteine 2346–cysteine 2357, cysteine 2351–cysteine 2366, cysteine 2368–cysteine 2377, cysteine 2559–cysteine 2585, cysteine 2592–cysteine 2607, cysteine 2601–cysteine 2616, cysteine 2618–cysteine 2627, cysteine 2787–cysteine 2822, cysteine 2869–cysteine 2880, cysteine 2874–cysteine 2891, and cysteine 2893–cysteine 2902. Residues 2346–2377 (CRTTPCHNGGRCVDTRFGPHCSCPVGYTGPRC) form the EGF-like 1 domain. Positions 2379–2585 (QTTRSFRGNG…GLSRNSVAGC (207 aa)) constitute a Laminin G-like 1 domain. Residues 2592-2627 (CAQTETTARCWEHGNCVGSLSEARCHCRPGWTGPAC) form the EGF-like 2 domain. The region spanning 2631-2822 (TIPTTFKAQS…TMARNLEKGC (192 aa)) is the Laminin G-like 2 domain. Residues 2869–2902 (CLDMPCMNGATCINLEPRLRYRCICPDGFWGENC) form the EGF-like 3 domain. The helical transmembrane segment at 2917 to 2937 (ALAAILVCLLIILILVLVFVV) threads the bilayer. Residues 2938 to 3097 (YNRRREAHIK…PNPHNTELEL (160 aa)) lie on the Cytoplasmic side of the membrane.

In the embryo, the protein first appears in the mesoderm at stage 9 and is present in the myoblasts and muscle fibers by stage 12 and stage 14, respectively. At stage 12 the protein is also located in the axons of the entire CNS, but not in the glial cells. In third instar larvae protein is expressed in the CNS neuropile, photoreceptor axons and precursors of adult muscles.

The protein localises to the cell membrane. Its function is as follows. Cadherins are calcium-dependent cell adhesion proteins. They preferentially interact with themselves in a homophilic manner in connecting cells; cadherins may thus contribute to the sorting of heterogeneous cell types. May associate with arm neural isoform and participate in the transmission of developmental information. This chain is Neural-cadherin (CadN), found in Drosophila melanogaster (Fruit fly).